The primary structure comprises 2092 residues: Nonribosomal peptide synthetase echPS (2092 aa).

The adenylation 1 stretch occupies residues 13-406 (FSQRCCQNPD…GRRDRVTKIR (394 aa)). Positions 524 to 600 (SGPLTIGQAI…SLIEKSRHET (77 aa)) constitute a Carrier 1 domain. S561 is modified (O-(pantetheine 4'-phosphoryl)serine). The interval 596-626 (SRHETEDTPDSSAFATRTPEESSMPTQGPVT) is disordered. Positions 605–624 (DSSAFATRTPEESSMPTQGP) are enriched in polar residues. Positions 624 to 1017 (PVTPLQKRMV…YTSLLDAFLD (394 aa)) are condensation 1. Residues 1068–1446 (ASLYPTHVAV…GRKDRQVKVR (379 aa)) form an adenylation 2 region. In terms of domain architecture, Carrier 2 spans 1544–1622 (IKTTHLEKLI…DLVILVAQQQ (79 aa)). S1582 carries the O-(pantetheine 4'-phosphoryl)serine modification. The condensation 2 stretch occupies residues 1663-2047 (SQSQSTFNVS…EALLLECFRI (385 aa)).

This sequence belongs to the NRP synthetase family. It depends on pantetheine 4'-phosphate as a cofactor.

It catalyses the reaction L-tryptophan + L-alanine + 2 ATP = cyclo(L-tryptophyl-L-alanyl) + 2 ADP + 2 phosphate + 2 H(+). It participates in secondary metabolite biosynthesis. It functions in the pathway alkaloid biosynthesis. Functionally, nonribosomal peptide synthetase; part of the gene cluster that mediates the biosynthesis of echinulin family alkaloid. The pathway begins with the biosynthesis of the cyclic dipeptide cyclo-L-Trp-L-Ala (cyclo-TA) by the NRPS echPS via condensation of L-alanine and L-tryptophan. The prenyltransferase echPT1 then catalyzes the first prenylation step, a reverse prenylation reaction at C2, to yield preechinulin. Preechinulin is the substrate of the cytochrome P450 monooxygenase echP450 that catalyzes the formation of the double bond between C10 and C11 to produce neoechulin A. The unique prenyltransferase echPT2 functions as a competitive enzyme with echP450 for preechinulin metabolization and uses preechinulin for effective regiospecific prenylations. Preechinulin is prenylated by echPT2 at C5 or C7. C7-prenylation leads to accumulation of tardioxopiperazine B without further modification by echPT2. In contrast, the C5-prenylated tardioxopiperazine A can be prenylated again by echPT2, predominantly at C7 to form echinulin or less frequently at C4 to give variecolorin L. EchPT2 also accepts neoechilunin A to produce varlecolorin G (prenylation at C5) or isoechinulin A (prenylation at C7). EchPT2 further converts isoechinulin A into dehydroechinulin. Moreover, a yet unidentified enzyme can also convert neoechilunin A into neoechilunin B by introducing a double bond between positions C14 and C17 and thus provides a further substrate to echPT2 for C5 and C7 prenylation. The sequence is that of Nonribosomal peptide synthetase echPS from Aspergillus ruber (strain CBS 135680).